A 386-amino-acid chain; its full sequence is MGHQAQHGTDDTEELLAAHRQLWCHALGYVKSMALKCALDLRIPDTIDRCGGSATLGELLAASEISASNHDYLRRVMRTLTAMRIFAASHDPAKADDAAAISYQLTPASRLLVSSSSSVDDAAGASKENTTTPSILPNIAHLVRPNTISLLFSMGEWMKDESAASVSLYETVHRQGMWACVEDDAANRASFYESMDADTRLVMQAVVRRCPHVFDGIKSLVDVGGGRGTAAAAVVAAFPHIQRCTVMDLPHVVAEAPAGTAGLSFHGGDMFEHIPSADALMLKWILHDWDEDKCIKIMERCKEAIGGKEAGGKVIIIDTVLGSRADDDDDDKTCRETYVLDLHILSFVNGAEREEHEWRRIFLAAGFRDYKITHTRGIPSIIEVFP.

S-adenosyl-L-methionine is bound by residues Gly224, Asp248, Met270, and Lys283. His287 (proton acceptor) is an active-site residue.

This sequence belongs to the class I-like SAM-binding methyltransferase superfamily. Cation-independent O-methyltransferase family. COMT subfamily. Expressed in seedlings and newly formed crown roots. Highest expression in the scutellar node. Low to non detectable levels in cob, tassel and mature organs like husk or leaves.

It catalyses the reaction TRIBOA beta-D-glucoside + S-adenosyl-L-methionine = DIMBOA beta-D-glucoside + S-adenosyl-L-homocysteine + H(+). Its function is as follows. O-methyltransferase involved in the benzoxazinoid glucoside biosynthesis. Can use 2,4,7-trihydroxy-2H-1,4-benzoxazin-3(4H)-one 2-D-glucoside (TRIBOA-glucoside) as substrate, but not aglucone TRIBOA, caffeic acid, ferulic acid, apigenin or quercetin. In Zea mays (Maize), this protein is TRIBOA-glucoside O-methyltransferase BX7 (BX7).